Reading from the N-terminus, the 132-residue chain is uncharacterized protein (132 aa).

Positions 1 to 25 are cleaved as a signal peptide; the sequence is MRFTKVVGFLSVLGLAAVFPLTAQA.

This is an uncharacterized protein from Bacillus subtilis (strain 168).